The following is a 2185-amino-acid chain: Genome polyprotein (2185 aa).

Residue Gly-2 is the site of N-myristoyl glycine; by host attachment. The Cytoplasmic segment spans residues 2 to 1495; it reads GAQVSTQKTG…HVSRAFICLQ (1494 aa). The interval 568–584 is amphipathic alpha-helix; the sequence is FFQGPVEDAITAAIGRV. Residues His-872 and Asp-890 each act as for protease 2A activity in the active site. The Zn(2+) site is built by Cys-907 and Cys-909. Cys-961 acts as the For protease 2A activity in catalysis. Zn(2+) contacts are provided by Cys-967 and His-969. The tract at residues 1101-1173 is membrane-binding; sequence NNSWLKKFTE…EQSAPSQSDQ (73 aa). The interval 1101–1239 is oligomerization; it reads NNSWLKKFTE…SPGAGKSVAT (139 aa). The interval 1122-1126 is RNA-binding; that stretch reads AVKIQ. The region spanning 1205 to 1361 is the SF3 helicase domain; the sequence is EKKMSNYIQF…SMYSQNGKIN (157 aa). Positions 1369, 1381, and 1386 each coordinate Zn(2+). Residues 1369–1386 form a C4-type; degenerate zinc finger; that stretch reads CDDECCPVNFKKCCPLVC. The segment at 1413–1420 is RNA-binding; the sequence is EYNHRHSV. The tract at residues 1424-1429 is oligomerization; sequence LEALFQ. Residues 1496–1511 lie within the membrane without spanning it; that stretch reads ALTTFVSVAGIIYIIY. The Cytoplasmic portion of the chain corresponds to 1512 to 2185; it reads KLFAGFQGAY…TLRRKWLDSF (674 aa). Tyr-1521 carries the O-(5'-phospho-RNA)-tyrosine modification. The 179-residue stretch at 1541–1719 folds into the Peptidase C3 domain; it reads GPAFEFAVAM…FSAALLKHYF (179 aa). Active-site for protease 3C activity residues include His-1580, Glu-1611, and Cys-1687. In terms of domain architecture, RdRp catalytic spans 1950 to 2066; that stretch reads GHLIAFDYSG…SYPWPIDASL (117 aa). Residues Asp-1956 and Asp-2052 each coordinate Mg(2+).

The protein belongs to the picornaviruses polyprotein family. Interacts with capsid protein VP1 and capsid protein VP3 to form heterotrimeric protomers. As to quaternary structure, interacts with capsid protein VP0, and capsid protein VP3 to form heterotrimeric protomers. Five protomers subsequently associate to form pentamers which serve as building blocks for the capsid. Interacts with capsid protein VP2, capsid protein VP3 and capsid protein VP4 following cleavage of capsid protein VP0. Interacts with host CD55. Interacts with host CXADR. In terms of assembly, interacts with capsid protein VP1 and capsid protein VP3 in the mature capsid. Interacts with capsid protein VP0 and capsid protein VP1 to form heterotrimeric protomers. Five protomers subsequently associate to form pentamers which serve as building blocks for the capsid. Interacts with capsid protein VP4 in the mature capsid. Interacts with protein 2C; this interaction may be important for virion morphogenesis. As to quaternary structure, interacts with capsid protein VP1 and capsid protein VP3. In terms of assembly, homodimer. Homohexamer; forms a hexameric ring structure with 6-fold symmetry characteristic of AAA+ ATPases. Interacts (via N-terminus) with host RTN3 (via reticulon domain); this interaction is important for viral replication. Interacts with capsid protein VP3; this interaction may be important for virion morphogenesis. As to quaternary structure, interacts with protein 3CD. In terms of assembly, homodimer. Interacts with host GBF1. Interacts (via GOLD domain) with host ACBD3 (via GOLD domain); this interaction allows the formation of a viral protein 3A/ACBD3 heterotetramer with a 2:2 stoichiometry, which will stimulate the recruitment of host PI4KB in order to synthesize PI4P at the viral RNA replication sites. Interacts with RNA-directed RNA polymerase. As to quaternary structure, interacts with host TICAM1 (via C-terminus). In terms of assembly, interacts with protein 3AB and with RNA-directed RNA polymerase. Interacts with Viral protein genome-linked and with protein 3CD. Mg(2+) is required as a cofactor. Post-translationally, specific enzymatic cleavages in vivo by the viral proteases yield processing intermediates and the mature proteins. Myristoylation is required for the formation of pentamers during virus assembly. Further assembly of 12 pentamers and a molecule of genomic RNA generates the provirion. In terms of processing, during virion maturation, immature virions are rendered infectious following cleavage of VP0 into VP4 and VP2. This maturation seems to be an autocatalytic event triggered by the presence of RNA in the capsid and it is followed by a conformational change infectious virion. Post-translationally, myristoylation is required during RNA encapsidation and formation of the mature virus particle. VPg is uridylylated by the polymerase into VPg-pUpU. This acts as a nucleotide-peptide primer for the genomic RNA replication.

The protein localises to the virion. The protein resides in the host cytoplasm. Its subcellular location is the host cytoplasmic vesicle membrane. It is found in the host nucleus. It carries out the reaction a ribonucleoside 5'-triphosphate + H2O = a ribonucleoside 5'-diphosphate + phosphate + H(+). The enzyme catalyses Selective cleavage of Tyr-|-Gly bond in the picornavirus polyprotein.. It catalyses the reaction RNA(n) + a ribonucleoside 5'-triphosphate = RNA(n+1) + diphosphate. The catalysed reaction is Selective cleavage of Gln-|-Gly bond in the poliovirus polyprotein. In other picornavirus reactions Glu may be substituted for Gln, and Ser or Thr for Gly.. With respect to regulation, replication or transcription is subject to high level of random mutations by the nucleotide analog ribavirin. Functionally, forms an icosahedral capsid of pseudo T=3 symmetry with capsid proteins VP2 and VP3. The capsid is 300 Angstroms in diameter, composed of 60 copies of each capsid protein and enclosing the viral positive strand RNA genome. Capsid protein VP1 mainly forms the vertices of the capsid. Capsid protein VP1 interacts with host CD55 and CXADR to provide virion attachment to target host cells. This attachment induces virion internalization. Tyrosine kinases are probably involved in the entry process. After binding to its receptor, the capsid undergoes conformational changes. Capsid protein VP1 N-terminus (that contains an amphipathic alpha-helix) and capsid protein VP4 are externalized. Together, they shape a pore in the host membrane through which viral genome is translocated to host cell cytoplasm. Its function is as follows. Forms an icosahedral capsid of pseudo T=3 symmetry with capsid proteins VP2 and VP3. The capsid is 300 Angstroms in diameter, composed of 60 copies of each capsid protein and enclosing the viral positive strand RNA genome. In terms of biological role, lies on the inner surface of the capsid shell. After binding to the host receptor, the capsid undergoes conformational changes. Capsid protein VP4 is released, Capsid protein VP1 N-terminus is externalized, and together, they shape a pore in the host membrane through which the viral genome is translocated into the host cell cytoplasm. Component of immature procapsids, which is cleaved into capsid proteins VP4 and VP2 after maturation. Allows the capsid to remain inactive before the maturation step. Functionally, cysteine protease that cleaves viral polyprotein and specific host proteins. It is responsible for the autocatalytic cleavage between the P1 and P2 regions, which is the first cleavage occurring in the polyprotein. Also cleaves the host translation initiation factor EIF4G1, in order to shut down the capped cellular mRNA translation. Inhibits the host nucleus-cytoplasm protein and RNA trafficking by cleaving host members of the nuclear pores. Counteracts stress granule formation probably by antagonizing its assembly or promoting its dissassembly. Cleaves and inhibits host IFIH1/MDA5, thereby inhibiting the type-I IFN production and the establishment of the antiviral state. Cleaves and inhibits host MAVS, thereby inhibiting the type-I IFN production and the establishment of the antiviral state. Its function is as follows. Plays an essential role in the virus replication cycle by acting as a viroporin. Creates a pore in the host endoplasmic reticulum and as a consequence releases Ca2+ in the cytoplasm of infected cell. In turn, high levels of cytoplasmic calcium may trigger membrane trafficking and transport of viral ER-associated proteins to viroplasms, sites of viral genome replication. In terms of biological role, induces and associates with structural rearrangements of intracellular membranes. Displays RNA-binding, nucleotide binding and NTPase activities. May play a role in virion morphogenesis and viral RNA encapsidation by interacting with the capsid protein VP3. Localizes the viral replication complex to the surface of membranous vesicles. Together with protein 3CD binds the Cis-Active RNA Element (CRE) which is involved in RNA synthesis initiation. Acts as a cofactor to stimulate the activity of 3D polymerase, maybe through a nucleid acid chaperone activity. Functionally, localizes the viral replication complex to the surface of membranous vesicles. It inhibits host cell endoplasmic reticulum-to-Golgi apparatus transport and causes the disassembly of the Golgi complex, possibly through GBF1 interaction. This would result in depletion of MHC, trail receptors and IFN receptors at the host cell surface. Plays an essential role in viral RNA replication by recruiting ACBD3 and PI4KB at the viral replication sites, thereby allowing the formation of the rearranged membranous structures where viral replication takes place. Its function is as follows. Acts as a primer for viral RNA replication and remains covalently bound to viral genomic RNA. VPg is uridylylated prior to priming replication into VPg-pUpU. The oriI viral genomic sequence may act as a template for this. The VPg-pUpU is then used as primer on the genomic RNA poly(A) by the RNA-dependent RNA polymerase to replicate the viral genome. During genome replication, the VPg-RNA linkage is removed by the host TDP2, thereby accelerating replication. During the late stage of the replication cycle, host TDP2 is excluded from sites of viral RNA synthesis and encapsidation, allowing for the generation of progeny virions. In terms of biological role, involved in the viral replication complex and viral polypeptide maturation. It exhibits protease activity with a specificity and catalytic efficiency that is different from protease 3C. Protein 3CD lacks polymerase activity. Protein 3CD binds to the 5'UTR of the viral genome. Major viral protease that mediates proteolytic processing of the polyprotein. Cleaves host EIF5B, contributing to host translation shutoff. Cleaves also host PABPC1, contributing to host translation shutoff. Cleaves and inhibits host RIGI, thereby inhibiting the type-I IFN production and the establishment of the antiviral state. Cleaves and inhibits host MAVS, thereby inhibiting the type-I IFN production and the establishment of the antiviral state. Cleaves and inhibits host TICAM1/TRIF, thereby inhibiting the type-I IFN production. Cleaves host NLRP1, triggers host N-glycine-mediated degradation of the autoinhibitory NLRP1 N-terminal fragment. Cleaves host transcription factor TFEB, thereby disrupting host lysosomal functions and enhancing viral infection. Functionally, replicates the viral genomic RNA on the surface of intracellular membranes. May form linear arrays of subunits that propagate along a strong head-to-tail interaction called interface-I. Covalently attaches UMP to a tyrosine of VPg, which is used to prime RNA synthesis. The positive stranded RNA genome is first replicated at virus induced membranous vesicles, creating a dsRNA genomic replication form. This dsRNA is then used as template to synthesize positive stranded RNA genomes. ss(+)RNA genomes are either translated, replicated or encapsidated. The sequence is that of Genome polyprotein from Coxsackievirus B3 (strain Nancy).